Consider the following 377-residue polypeptide: Geranylgeranyl transferase type-1 subunit beta (377 aa).

PFTB repeat units lie at residues 144–186 (KEAC…YMLN), 193–234 (MKKA…CLMG), 245–284 (LNRIKRWCIMRQQNGYHGRPNKPVDTCYSFWVGATLKLLK), and 291–333 (FEKN…SLME). Geranylgeranyl diphosphate is bound by residues 219–221 (HGG) and 263–266 (RPNK). Zn(2+) is bound by residues Asp269 and Cys271. Residue 272 to 275 (YSFW) participates in geranylgeranyl diphosphate binding. His321 contributes to the Zn(2+) binding site.

Belongs to the protein prenyltransferase subunit beta family. Heterodimer of FNTA and PGGT1B. PGGT1B mediates interaction with substrate peptides. It depends on Zn(2+) as a cofactor. The cofactor is Mg(2+).

It catalyses the reaction geranylgeranyl diphosphate + L-cysteinyl-[protein] = S-geranylgeranyl-L-cysteinyl-[protein] + diphosphate. In terms of biological role, catalyzes the transfer of a geranyl-geranyl moiety from geranyl-geranyl pyrophosphate to a cysteine at the fourth position from the C-terminus of proteins having the C-terminal sequence Cys-aliphatic-aliphatic-X. Known substrates include RAC1, RAC2, RAP1A and RAP1B. The sequence is that of Geranylgeranyl transferase type-1 subunit beta (PGGT1B) from Bos taurus (Bovine).